Reading from the N-terminus, the 66-residue chain is Heat-stable enterotoxin (66 aa).

An N-terminal signal peptide occupies residues 1 to 19 (MKKIVFVLVLMLSSFGTFG). Positions 20 to 50 (QETASRQFGDAFSTPIAAEVNKKACDTELPP) are excised as a propeptide. Intrachain disulfides connect cysteine 54-cysteine 59, cysteine 55-cysteine 63, and cysteine 58-cysteine 66.

This sequence belongs to the heat-stable enterotoxin family.

The protein localises to the secreted. Functionally, toxin which activates the particulate form of guanylate cyclase and increases cyclic GMP levels within the host intestinal epithelial cells. In Yersinia kristensenii, this protein is Heat-stable enterotoxin (yst).